The chain runs to 1371 residues: Probable serine/threonine-protein kinase DDB_G0293292 (1371 aa).

2 Protein kinase domains span residues asparagine 9–threonine 269 and phenylalanine 1131–leucine 1371. ATP contacts are provided by residues isoleucine 15 to lysine 23 and lysine 39. Aspartate 143 serves as the catalytic Proton acceptor.

This sequence belongs to the protein kinase superfamily. Ser/Thr protein kinase family.

It catalyses the reaction L-seryl-[protein] + ATP = O-phospho-L-seryl-[protein] + ADP + H(+). The catalysed reaction is L-threonyl-[protein] + ATP = O-phospho-L-threonyl-[protein] + ADP + H(+). This chain is Probable serine/threonine-protein kinase DDB_G0293292, found in Dictyostelium discoideum (Social amoeba).